The primary structure comprises 561 residues: Nucleoprotein (561 aa).

Positions 53 to 237 are binding site for the cap structure m7GTP; that stretch reads MRKDKRSEAD…ITQEPAQINI (185 aa). Mn(2+) is bound by residues Asp380 and Glu382. The Zn(2+) site is built by Glu390, Cys497, His500, and Cys521. A Mn(2+)-binding site is contributed by Asp525.

Belongs to the arenaviridae nucleocapsid protein family. As to quaternary structure, homomultimerizes to form the nucleocapsid. Binds to viral genomic RNA. Interacts with glycoprotein G2. Interacts with protein Z; this interaction probably directs the encapsidated genome to budding sites. Interacts with protein L; this interaction does not interfere with Z-L interaction. Interacts with host IKBKE (via Protein kinase domain); the interaction inhibits IKBKE kinase activity.

It localises to the virion. The protein localises to the host cytoplasm. Functionally, encapsidates the genome, protecting it from nucleases. The encapsidated genomic RNA is termed the nucleocapsid (NC). Serves as template for viral transcription and replication. The increased presence of protein N in host cell does not seem to trigger the switch from transcription to replication as observed in other negative strain RNA viruses. Through the interaction with host IKBKE, strongly inhibits the phosphorylation and nuclear translocation of host IRF3, a protein involved in interferon activation pathway, leading to the inhibition of interferon-beta and IRF3-dependent promoters activation. Also encodes a functional 3'-5' exoribonuclease that degrades preferentially dsRNA substrates and thereby participates in the suppression of interferon induction. The protein is Nucleoprotein of Allpahuayo mammarenavirus (isolate Rat/Peru/CLHP-2472/1997) (ALLV).